Consider the following 301-residue polypeptide: uncharacterized protein (301 aa).

Residues Glu146, Glu148, and Asp177 each coordinate a divalent metal cation.

The protein belongs to the FAH family.

This is an uncharacterized protein from Staphylococcus epidermidis (strain ATCC 12228 / FDA PCI 1200).